The chain runs to 251 residues: Hydroxyacylglutathione hydrolase (251 aa).

Positions 53, 55, 57, 58, 110, 127, and 165 each coordinate Zn(2+).

It belongs to the metallo-beta-lactamase superfamily. Glyoxalase II family. Monomer. Zn(2+) serves as cofactor.

It carries out the reaction an S-(2-hydroxyacyl)glutathione + H2O = a 2-hydroxy carboxylate + glutathione + H(+). The protein operates within secondary metabolite metabolism; methylglyoxal degradation; (R)-lactate from methylglyoxal: step 2/2. In terms of biological role, thiolesterase that catalyzes the hydrolysis of S-D-lactoyl-glutathione to form glutathione and D-lactic acid. This chain is Hydroxyacylglutathione hydrolase, found in Escherichia coli O45:K1 (strain S88 / ExPEC).